The chain runs to 268 residues: Hydroxyethylthiazole kinase (268 aa).

Met47 is a substrate binding site. The ATP site is built by Lys123 and Thr170. Substrate is bound at residue Ala196.

Belongs to the Thz kinase family. It depends on Mg(2+) as a cofactor.

The catalysed reaction is 5-(2-hydroxyethyl)-4-methylthiazole + ATP = 4-methyl-5-(2-phosphooxyethyl)-thiazole + ADP + H(+). The protein operates within cofactor biosynthesis; thiamine diphosphate biosynthesis; 4-methyl-5-(2-phosphoethyl)-thiazole from 5-(2-hydroxyethyl)-4-methylthiazole: step 1/1. Functionally, catalyzes the phosphorylation of the hydroxyl group of 4-methyl-5-beta-hydroxyethylthiazole (THZ). The protein is Hydroxyethylthiazole kinase of Finegoldia magna (strain ATCC 29328 / DSM 20472 / WAL 2508) (Peptostreptococcus magnus).